Consider the following 141-residue polypeptide: Nucleoside diphosphate kinase (141 aa).

ATP is bound by residues Lys9, Phe57, Arg85, Thr91, Arg102, and Asn112. Residue His115 is the Pros-phosphohistidine intermediate of the active site.

It belongs to the NDK family. Homotetramer. Mg(2+) is required as a cofactor.

Its subcellular location is the cytoplasm. The enzyme catalyses a 2'-deoxyribonucleoside 5'-diphosphate + ATP = a 2'-deoxyribonucleoside 5'-triphosphate + ADP. The catalysed reaction is a ribonucleoside 5'-diphosphate + ATP = a ribonucleoside 5'-triphosphate + ADP. In terms of biological role, major role in the synthesis of nucleoside triphosphates other than ATP. The ATP gamma phosphate is transferred to the NDP beta phosphate via a ping-pong mechanism, using a phosphorylated active-site intermediate. The sequence is that of Nucleoside diphosphate kinase from Chloroherpeton thalassium (strain ATCC 35110 / GB-78).